The sequence spans 141 residues: Nucleoside diphosphate kinase (141 aa).

ATP-binding residues include Lys11, Phe59, Arg87, Thr93, Arg104, and Asn114. His117 serves as the catalytic Pros-phosphohistidine intermediate.

This sequence belongs to the NDK family. In terms of assembly, homotetramer. The cofactor is Mg(2+).

The protein resides in the cytoplasm. It catalyses the reaction a 2'-deoxyribonucleoside 5'-diphosphate + ATP = a 2'-deoxyribonucleoside 5'-triphosphate + ADP. The catalysed reaction is a ribonucleoside 5'-diphosphate + ATP = a ribonucleoside 5'-triphosphate + ADP. Functionally, major role in the synthesis of nucleoside triphosphates other than ATP. The ATP gamma phosphate is transferred to the NDP beta phosphate via a ping-pong mechanism, using a phosphorylated active-site intermediate. The protein is Nucleoside diphosphate kinase of Ralstonia pickettii (strain 12J).